We begin with the raw amino-acid sequence, 233 residues long: Orotidine 5'-phosphate decarboxylase (233 aa).

Residues aspartate 11, lysine 34, 61–70 (DLKLHDIPNT), threonine 117, arginine 179, glutamine 189, glycine 209, and arginine 210 each bind substrate. Residue lysine 63 is the Proton donor of the active site.

This sequence belongs to the OMP decarboxylase family. Type 1 subfamily. As to quaternary structure, homodimer.

It catalyses the reaction orotidine 5'-phosphate + H(+) = UMP + CO2. The protein operates within pyrimidine metabolism; UMP biosynthesis via de novo pathway; UMP from orotate: step 2/2. Catalyzes the decarboxylation of orotidine 5'-monophosphate (OMP) to uridine 5'-monophosphate (UMP). This is Orotidine 5'-phosphate decarboxylase from Streptococcus agalactiae serotype V (strain ATCC BAA-611 / 2603 V/R).